We begin with the raw amino-acid sequence, 325 residues long: Formimidoylglutamase (325 aa).

Residues H130, D156, H158, D160, C244, and D246 each contribute to the Mn(2+) site.

The protein belongs to the arginase family. The cofactor is Mn(2+).

The enzyme catalyses N-formimidoyl-L-glutamate + H2O = formamide + L-glutamate. Its pathway is amino-acid degradation; L-histidine degradation into L-glutamate; L-glutamate from N-formimidoyl-L-glutamate (hydrolase route): step 1/1. In terms of biological role, catalyzes the conversion of N-formimidoyl-L-glutamate to L-glutamate and formamide. This Geobacillus sp. (strain WCH70) protein is Formimidoylglutamase.